The following is a 2220-amino-acid chain: Calcineurin-binding protein cabin-1 (2220 aa).

Ser-10 and Ser-11 each carry phosphoserine. Thr-12 is modified (phosphothreonine). Residues Ser-20 and Ser-66 each carry the phosphoserine modification. TPR repeat units follow at residues 36-69 (AFAL…SLLR), 90-123 (YSTY…DSTD), and 125-157 (NLWY…NPDH). A disordered region spans residues 361–400 (GAPVGDISGGDKSKKGVKRKKISEESGETAKRRSARVRNT). The segment covering 382–391 (ISEESGETAK) has biased composition (basic and acidic residues). Phosphoserine is present on residues Ser-433 and Ser-450. The TPR 4 repeat unit spans residues 615–648 (VRVYWLKARFLALQGDMEQALENYDICTEMLQSS). Position 673 is a phosphoserine (Ser-673). TPR repeat units follow at residues 1055–1088 (NELY…CPNR) and 1106–1139 (KLNS…DSSN). Disordered regions lie at residues 1299–1476 (FARG…STPT), 1668–1845 (AEGS…RLSR), 1916–2165 (AQRQ…GSIS), and 2197–2220 (VLET…YMDI). The span at 1301 to 1324 (RGEEKNTPKASEKEKACLVDEDSH) shows a compositional bias: basic and acidic residues. Positions 1327–1349 (AGTLPGPGASLPSSSGPGLTSPP) are enriched in low complexity. Residues 1377 to 1397 (DSTAVALSDSSSTQDFFNEPT) are compositionally biased toward polar residues. Over residues 1402–1412 (GSRKSYTEKRL) the composition is skewed to basic and acidic residues. Ser-1439 carries the phosphoserine modification. The segment covering 1715-1725 (SGPGPEPGGKV) has biased composition (gly residues). 2 stretches are compositionally biased toward basic and acidic residues: residues 1744 to 1753 (SGERKDKESP) and 1784 to 1794 (PARDRGPESRP). Residues 1812 to 1823 (PLTPAQPAPAPA) show a composition bias toward pro residues. 2 stretches are compositionally biased toward polar residues: residues 1918 to 1927 (RQASGDTPTT) and 1975 to 1989 (TIIT…STLD). A Phosphothreonine modification is found at Thr-1924. Basic and acidic residues predominate over residues 2070-2081 (GKLRPEPRRDGE). Positions 2091–2112 (PLSSPPTAASSKAPSSGSAQPP) are enriched in low complexity. The residue at position 2094 (Ser-2094) is a Phosphoserine. The required for interaction with calcineurin stretch occupies residues 2116-2153 (PGKPEPSRAKSRPLPNMPKLVIPSAATKFPPEITVTPP). Residues Thr-2151 and Thr-2154 each carry the phosphothreonine modification. The span at 2207–2220 (LESETDEDDDYMDI) shows a compositional bias: acidic residues.

In terms of assembly, component of a complex that includes at least ASF1A, CABIN1, HIRA, histone H3.3 and UBN1. Interacts with calcineurin. Interacts with MEF2B. Activated through PKC-mediated hyperphosphorylation. Phosphorylation by the DNA damage kinases ATM and CHK2 enhances ubiquitination. In terms of processing, upon genotoxic stress, ubiquitination by the DCX(DDB2) E3 ubiquitin-protein ligase complex targets CABIN1 for proteasomal degradation, leading to the release of p53/TP53. Widely expressed in different tissues.

The protein resides in the nucleus. In terms of biological role, may be required for replication-independent chromatin assembly. May serve as a negative regulator of T-cell receptor (TCR) signaling via inhibition of calcineurin. Inhibition of activated calcineurin is dependent on both PKC and calcium signals. Acts as a negative regulator of p53/TP53 by keeping p53 in an inactive state on chromatin at promoters of a subset of it's target genes. This Homo sapiens (Human) protein is Calcineurin-binding protein cabin-1 (CABIN1).